The following is a 232-amino-acid chain: Phosphatidylserine decarboxylase proenzyme (232 aa).

Ser-201 functions as the Schiff-base intermediate with substrate; via pyruvic acid in the catalytic mechanism. Ser-201 bears the Pyruvic acid (Ser); by autocatalysis mark.

It belongs to the phosphatidylserine decarboxylase family. PSD-A subfamily. As to quaternary structure, heterodimer of a large membrane-associated beta subunit and a small pyruvoyl-containing alpha subunit. Pyruvate serves as cofactor. Post-translationally, is synthesized initially as an inactive proenzyme. Formation of the active enzyme involves a self-maturation process in which the active site pyruvoyl group is generated from an internal serine residue via an autocatalytic post-translational modification. Two non-identical subunits are generated from the proenzyme in this reaction, and the pyruvate is formed at the N-terminus of the alpha chain, which is derived from the carboxyl end of the proenzyme. The post-translation cleavage follows an unusual pathway, termed non-hydrolytic serinolysis, in which the side chain hydroxyl group of the serine supplies its oxygen atom to form the C-terminus of the beta chain, while the remainder of the serine residue undergoes an oxidative deamination to produce ammonia and the pyruvoyl prosthetic group on the alpha chain.

The protein localises to the cell membrane. The enzyme catalyses a 1,2-diacyl-sn-glycero-3-phospho-L-serine + H(+) = a 1,2-diacyl-sn-glycero-3-phosphoethanolamine + CO2. It functions in the pathway phospholipid metabolism; phosphatidylethanolamine biosynthesis; phosphatidylethanolamine from CDP-diacylglycerol: step 2/2. In terms of biological role, catalyzes the formation of phosphatidylethanolamine (PtdEtn) from phosphatidylserine (PtdSer). This Mycolicibacterium smegmatis (strain ATCC 700084 / mc(2)155) (Mycobacterium smegmatis) protein is Phosphatidylserine decarboxylase proenzyme.